Here is a 45-residue protein sequence, read N- to C-terminus: Unknown protein from spots 23/28/205 of 2D-PAGE of thylakoid (45 aa).

The protein resides in the plastid. Its subcellular location is the chloroplast thylakoid. The chain is Unknown protein from spots 23/28/205 of 2D-PAGE of thylakoid from Pisum sativum (Garden pea).